The sequence spans 326 residues: Adenosine receptor A1 (326 aa).

Residues 1-10 (MPPYISAFQA) are Extracellular-facing. Residues 11 to 33 (AYIGIEVLIALVSVPGNVLVIWA) traverse the membrane as a helical segment. At 34–46 (VKVNQALRDATFC) the chain is on the cytoplasmic side. A helical membrane pass occupies residues 47-69 (FIVSLAVADVAVGALVIPLAILI). Over 70 to 80 (NIGPQTYFHTC) the chain is Extracellular. Residues Cys80 and Cys169 are joined by a disulfide bond. Residues 81-102 (LMVACPVLILTQSSILALLAIA) traverse the membrane as a helical segment. Over 103-123 (VDRYLRVKIPLRYKTVVTQRR) the chain is Cytoplasmic. Residues 124–146 (AAVAIAGCWILSLVVGLTPMFGW) traverse the membrane as a helical segment. Residues 147-176 (NNLSEVEQAWIANGSVGEPVIKCEFEKVIS) lie on the Extracellular side of the membrane. Residues Asn148 and Asn159 are each glycosylated (N-linked (GlcNAc...) asparagine). The chain crosses the membrane as a helical span at residues 177–201 (MEYMVYFNFFVWVLPPLLLMVLIYL). Topologically, residues 202-235 (EVFYLIRKQLNKKVSASSGDPQKYYGKELKIAKS) are cytoplasmic. Residues 236 to 259 (LALILFLFALSWLPLHILNCITLF) traverse the membrane as a helical segment. Over 260 to 267 (CPTCQKPS) the chain is Extracellular. The chain crosses the membrane as a helical span at residues 268–292 (ILIYIAIFLTHGNSAMNPIVYAFRI). Residues 293-326 (HKFRVTFLKIWNDHFRCQPKPPIEEDIPEEKADD) are Cytoplasmic-facing. A lipid anchor (S-palmitoyl cysteine) is attached at Cys309.

It belongs to the G-protein coupled receptor 1 family.

Its subcellular location is the cell membrane. In terms of biological role, receptor for adenosine. The activity of this receptor is mediated by G proteins which inhibit adenylyl cyclase. This Mus musculus (Mouse) protein is Adenosine receptor A1 (Adora1).